A 139-amino-acid polypeptide reads, in one-letter code: Trafficking protein particle complex subunit 2-like protein (139 aa).

The protein belongs to the TRAPP small subunits family. Sedlin subfamily.

Its subcellular location is the cytoplasm. The protein resides in the perinuclear region. It localises to the endoplasmic reticulum. It is found in the golgi apparatus. May play a role in vesicular transport from endoplasmic reticulum to Golgi. In Xenopus tropicalis (Western clawed frog), this protein is Trafficking protein particle complex subunit 2-like protein (trappc2l).